The chain runs to 77 residues: Acyl carrier protein (77 aa).

In terms of domain architecture, Carrier spans 2 to 77 (AEVFDRVKEI…DAVDYINSKA (76 aa)). Ser-37 carries the post-translational modification O-(pantetheine 4'-phosphoryl)serine.

It belongs to the acyl carrier protein (ACP) family. Post-translationally, 4'-phosphopantetheine is transferred from CoA to a specific serine of apo-ACP by AcpS. This modification is essential for activity because fatty acids are bound in thioester linkage to the sulfhydryl of the prosthetic group.

Its subcellular location is the cytoplasm. Its pathway is lipid metabolism; fatty acid biosynthesis. Functionally, carrier of the growing fatty acid chain in fatty acid biosynthesis. The polypeptide is Acyl carrier protein (Oceanobacillus iheyensis (strain DSM 14371 / CIP 107618 / JCM 11309 / KCTC 3954 / HTE831)).